Reading from the N-terminus, the 264-residue chain is S-adenosylmethionine decarboxylase proenzyme (264 aa).

The active-site Schiff-base intermediate with substrate; via pyruvic acid is Ser-112. At Ser-112 the chain carries Pyruvic acid (Ser); by autocatalysis. His-117 acts as the Proton acceptor; for processing activity in catalysis. Cys-140 acts as the Proton donor; for catalytic activity in catalysis.

This sequence belongs to the prokaryotic AdoMetDC family. Type 2 subfamily. Heterooctamer of four alpha and four beta chains arranged as a tetramer of alpha/beta heterodimers. Requires pyruvate as cofactor. Post-translationally, is synthesized initially as an inactive proenzyme. Formation of the active enzyme involves a self-maturation process in which the active site pyruvoyl group is generated from an internal serine residue via an autocatalytic post-translational modification. Two non-identical subunits are generated from the proenzyme in this reaction, and the pyruvate is formed at the N-terminus of the alpha chain, which is derived from the carboxyl end of the proenzyme. The post-translation cleavage follows an unusual pathway, termed non-hydrolytic serinolysis, in which the side chain hydroxyl group of the serine supplies its oxygen atom to form the C-terminus of the beta chain, while the remainder of the serine residue undergoes an oxidative deamination to produce ammonia and the pyruvoyl group blocking the N-terminus of the alpha chain.

It carries out the reaction S-adenosyl-L-methionine + H(+) = S-adenosyl 3-(methylsulfanyl)propylamine + CO2. It functions in the pathway amine and polyamine biosynthesis; S-adenosylmethioninamine biosynthesis; S-adenosylmethioninamine from S-adenosyl-L-methionine: step 1/1. Functionally, catalyzes the decarboxylation of S-adenosylmethionine to S-adenosylmethioninamine (dcAdoMet), the propylamine donor required for the synthesis of the polyamines spermine and spermidine from the diamine putrescine. The sequence is that of S-adenosylmethionine decarboxylase proenzyme from Klebsiella pneumoniae (strain 342).